Here is a 515-residue protein sequence, read N- to C-terminus: Maturase K (515 aa).

Belongs to the intron maturase 2 family. MatK subfamily.

It localises to the plastid. It is found in the chloroplast. Its function is as follows. Usually encoded in the trnK tRNA gene intron. Probably assists in splicing its own and other chloroplast group II introns. This chain is Maturase K, found in Pinus cembra (Swiss stone pine).